Reading from the N-terminus, the 338-residue chain is Palmitoyltransferase ZDHHC15 (338 aa).

Topologically, residues 1–20 are cytoplasmic; the sequence is MLAGCRVALPRGLRCCQRVL. The helical transmembrane segment at 21–41 threads the bilayer; the sequence is SWVPVVIISLVVLWSYYAYVW. Residues 42–56 are Lumenal-facing; that stretch reads ELCLVTVTNPAEKAA. A helical transmembrane segment spans residues 57–77; sequence YLLIFHTVFLLFIWTYWKAIF. The Cytoplasmic segment spans residues 78–172; the sequence is TPPKQPTKKF…NNCIGYSNYK (95 aa). The 51-residue stretch at 129 to 179 folds into the DHHC domain; sequence RFCDTCQMVKPDRCHHCSVCGMCVLKMDHHCPWVNNCIGYSNYKFFLLFLA. Residues C131, C134, H144, C145, C148, C151, and H158 each coordinate Zn(2+). Residue C159 is the S-palmitoyl cysteine intermediate of the active site. A Zn(2+)-binding site is contributed by C165. Residues 173–193 form a helical membrane-spanning segment; the sequence is FFLLFLAYAMLYCLYIGCTVF. At 194-210 the chain is on the lumenal side; it reads QYFILYWTDTLSNGRAK. The helical transmembrane segment at 211 to 234 threads the bilayer; it reads FHVLFLLFVALMFFISLMFLFGYH. Residues 235–338 are Cytoplasmic-facing; sequence CWLVSLNRTT…TSHITVHIEK (104 aa).

The protein belongs to the DHHC palmitoyltransferase family. Post-translationally, autopalmitoylated (in vitro).

It is found in the golgi apparatus membrane. It localises to the postsynaptic density. The enzyme catalyses L-cysteinyl-[protein] + hexadecanoyl-CoA = S-hexadecanoyl-L-cysteinyl-[protein] + CoA. It carries out the reaction L-cysteinyl-[protein] + tetradecanoyl-CoA = S-tetradecanoyl-L-cysteinyl-[protein] + CoA. It catalyses the reaction L-cysteinyl-[protein] + octadecanoyl-CoA = S-octadecanoyl-L-cysteinyl-[protein] + CoA. Palmitoyltransferase that catalyzes the addition of palmitate onto various protein substrates. Has no stringent fatty acid selectivity and in addition to palmitate can also transfer onto target proteins myristate from tetradecanoyl-CoA and stearate from octadecanoyl-CoA. May thereby regulate target proteins association and localization to membranes. In the nervous system, probably catalyzes the palmitoylation of synaptic proteins and is involved in the differentiation of dopaminergic neurons and the development of the diencephalon. The protein is Palmitoyltransferase ZDHHC15 (zdhhc15) of Xenopus laevis (African clawed frog).